We begin with the raw amino-acid sequence, 93 residues long: Small ribosomal subunit protein uS19 (93 aa).

It belongs to the universal ribosomal protein uS19 family.

Protein S19 forms a complex with S13 that binds strongly to the 16S ribosomal RNA. The polypeptide is Small ribosomal subunit protein uS19 (Agathobacter rectalis (strain ATCC 33656 / DSM 3377 / JCM 17463 / KCTC 5835 / VPI 0990) (Eubacterium rectale)).